A 263-amino-acid polypeptide reads, in one-letter code: tRNA uridine(34) hydroxylase (263 aa).

The region spanning 129–223 is the Rhodanese domain; sequence EGREIALLDT…YFEEVGGAHY (95 aa). Cys-183 acts as the Cysteine persulfide intermediate in catalysis.

Belongs to the TrhO family.

The catalysed reaction is uridine(34) in tRNA + AH2 + O2 = 5-hydroxyuridine(34) in tRNA + A + H2O. Catalyzes oxygen-dependent 5-hydroxyuridine (ho5U) modification at position 34 in tRNAs. The chain is tRNA uridine(34) hydroxylase from Variovorax paradoxus (strain S110).